The primary structure comprises 796 residues: Probable phosphoketolase 2 (796 aa).

The protein belongs to the XFP family. Thiamine diphosphate serves as cofactor.

This is Probable phosphoketolase 2 from Lactiplantibacillus plantarum (strain ATCC BAA-793 / NCIMB 8826 / WCFS1) (Lactobacillus plantarum).